Reading from the N-terminus, the 121-residue chain is Large ribosomal subunit protein bL20 (121 aa).

The protein belongs to the bacterial ribosomal protein bL20 family.

Its function is as follows. Binds directly to 23S ribosomal RNA and is necessary for the in vitro assembly process of the 50S ribosomal subunit. It is not involved in the protein synthesizing functions of that subunit. The polypeptide is Large ribosomal subunit protein bL20 (Methylorubrum extorquens (strain PA1) (Methylobacterium extorquens)).